The primary structure comprises 81 residues: MNVDHEVKLLVEEIHRLGSKNADGKLSVKFGVLFQDDKCANLFEALVGTLKAAKRRKIITYSGELLLQGVHDDVDIILLQD.

Met-1 carries the post-translational modification N-acetylmethionine.

This sequence belongs to the costars family.

The polypeptide is Costars family protein ABRACL (ABRACL) (Bos taurus (Bovine)).